The sequence spans 227 residues: MARGIFITATGTDIGKTYVTALIIKRLRETNINCGYYKAALSEAERRDGKLIAGDANYVYNIANIKGDPNDAVSYIFQQAVSPHLAAKLNNVEISMERIKKDFYSIKNKYDYITVEGSGGIVCPISTGKEKIMLDNIIKIFKLPAIVVADAGLGTINSTILTLQYMKEKNISVKMILLNNYNHEDIIHIENKGYLSDNLLIPVYTCNKNANNLEIPVEKLIEIYEEI.

Residue 13 to 18 (DIGKTY) participates in ATP binding. T17 contacts Mg(2+). K38 is a catalytic residue. S42 serves as a coordination point for substrate. Residues D55, 116–119 (EGSG), and 179–180 (NN) contribute to the ATP site. The Mg(2+) site is built by D55 and E116.

Belongs to the dethiobiotin synthetase family. In terms of assembly, homodimer. Mg(2+) serves as cofactor.

It localises to the cytoplasm. The catalysed reaction is (7R,8S)-7,8-diammoniononanoate + CO2 + ATP = (4R,5S)-dethiobiotin + ADP + phosphate + 3 H(+). Its pathway is cofactor biosynthesis; biotin biosynthesis; biotin from 7,8-diaminononanoate: step 1/2. Its function is as follows. Catalyzes a mechanistically unusual reaction, the ATP-dependent insertion of CO2 between the N7 and N8 nitrogen atoms of 7,8-diaminopelargonic acid (DAPA, also called 7,8-diammoniononanoate) to form a ureido ring. The chain is ATP-dependent dethiobiotin synthetase BioD from Clostridium botulinum (strain Kyoto / Type A2).